The primary structure comprises 496 residues: MAGGGTTLEYTPTWVVALVCSVIVSISFAVERLIHRAGKHFKNNDQKQLFGALQKIKEELMLVGFISLLLSVGQSKIAKICISKELSEKFLPCTKPAGAEKSLKDSSHFQFSFTGRHLLAGDAPAGDYCSLKGKVPIMSLSALHELHIFIFVLAVAHIIFCLLTIVFGTMKIKQWKKWEDKVLEKDFDTDQSIKKFTHVQEHEFIRSRFLGVGKADASLGWVQSFMKQFLASVNESDYITMRLGFVTTHCKTNPKFNFHKYLMRALNSDFKKVVGISWYLWVFVVLFLLLNIVAWHVYFWLAFIPLILLLAVGTKLEHIITDLAHEVAEKHIAVEGDLVVRPSDDLFWFQSPRLVLFLIHFILFQNSFEIAYFFFILFQFGWDSCIMDHVKFVIPRLVIGVIIQLLCSYSTLPLYALVTQMGSSFKGAIFNEQTQEHLVGWAKMAKRGVKKGATQVGTSHDATSPRPSIQLNSLLGKGSSQQNQNPKEKSEIAHHD.

Residues 1–9 (MAGGGTTLE) lie on the Extracellular side of the membrane. A helical transmembrane segment spans residues 10–30 (YTPTWVVALVCSVIVSISFAV). Over 31-59 (ERLIHRAGKHFKNNDQKQLFGALQKIKEE) the chain is Cytoplasmic. A helical transmembrane segment spans residues 60–80 (LMLVGFISLLLSVGQSKIAKI). Topologically, residues 81–147 (CISKELSEKF…MSLSALHELH (67 aa)) are extracellular. Residues 148–168 (IFIFVLAVAHIIFCLLTIVFG) traverse the membrane as a helical segment. Residues 169–269 (TMKIKQWKKW…KYLMRALNSD (101 aa)) lie on the Cytoplasmic side of the membrane. Residues 270-290 (FKKVVGISWYLWVFVVLFLLL) form a helical membrane-spanning segment. Asn291 is a topological domain (extracellular). A helical transmembrane segment spans residues 292-312 (IVAWHVYFWLAFIPLILLLAV). At 313–355 (GTKLEHIITDLAHEVAEKHIAVEGDLVVRPSDDLFWFQSPRLV) the chain is on the cytoplasmic side. A helical transmembrane segment spans residues 356 to 376 (LFLIHFILFQNSFEIAYFFFI). At 377-397 (LFQFGWDSCIMDHVKFVIPRL) the chain is on the extracellular side. A helical transmembrane segment spans residues 398 to 418 (VIGVIIQLLCSYSTLPLYALV). Residues 419 to 496 (TQMGSSFKGA…KEKSEIAHHD (78 aa)) lie on the Cytoplasmic side of the membrane. Positions 432–453 (EQTQEHLVGWAKMAKRGVKKGA) are calmodulin-binding. The tract at residues 454-496 (TQVGTSHDATSPRPSIQLNSLLGKGSSQQNQNPKEKSEIAHHD) is disordered. Residues 455 to 485 (QVGTSHDATSPRPSIQLNSLLGKGSSQQNQN) are compositionally biased toward polar residues. Basic and acidic residues predominate over residues 486 to 496 (PKEKSEIAHHD).

Belongs to the MLO family.

It is found in the membrane. Functionally, may be involved in modulation of pathogen defense and leaf cell death. Activity seems to be regulated by Ca(2+)-dependent calmodulin binding and seems not to require heterotrimeric G proteins. This Arabidopsis thaliana (Mouse-ear cress) protein is MLO-like protein 15 (MLO15).